The primary structure comprises 201 residues: Putative manganese efflux pump MntP 2 (201 aa).

Transmembrane regions (helical) follow at residues 3–23 (LISV…VSIT), 39–59 (IGLF…SIGI), 65–85 (IAAL…GKMI), 116–136 (LILL…SFAF), 141–161 (IINT…IGVM), and 176–196 (ILGG…HTNI).

It belongs to the MntP (TC 9.B.29) family.

It localises to the cell membrane. In terms of biological role, probably functions as a manganese efflux pump. This Clostridium botulinum (strain Langeland / NCTC 10281 / Type F) protein is Putative manganese efflux pump MntP 2.